A 301-amino-acid polypeptide reads, in one-letter code: MSIDKSYCGFIAIVGRPNVGKSTLLNKLLGQKISITSRKAQTTRHRIVGIHTEGAYQAIYVDTPGLHMEEKRAINRLMNKAASSSIGDVELVIFVVEGTRWTPDDEMVLNKLREGKAPVILAVNKVDNVQEKADLLPHLQFLASQMNFLDIVPISAETGLNVDTIAAIVRKHLPEATHHFPEDYITDRSQRFMASEIIREKLMRFLGAELPYSVTVEIERFVSNERGGCDINGLILVEREGQKKMVIGNKGAKIKTIGIEARKDMQEMFEAPVHLELWVKVKSGWADDERALRSLGYVDDL.

Residues 7 to 175 (YCGFIAIVGR…AAIVRKHLPE (169 aa)) enclose the Era-type G domain. The G1 stretch occupies residues 15–22 (GRPNVGKS). A GTP-binding site is contributed by 15–22 (GRPNVGKS). The segment at 41–45 (QTTRH) is G2. A G3 region spans residues 62–65 (DTPG). GTP contacts are provided by residues 62 to 66 (DTPGL) and 124 to 127 (NKVD). The G4 stretch occupies residues 124–127 (NKVD). Positions 154–156 (ISA) are G5. A KH type-2 domain is found at 206–283 (LGAELPYSVT…HLELWVKVKS (78 aa)).

It belongs to the TRAFAC class TrmE-Era-EngA-EngB-Septin-like GTPase superfamily. Era GTPase family. As to quaternary structure, monomer.

Its subcellular location is the cytoplasm. It is found in the cell inner membrane. In terms of biological role, an essential GTPase that binds both GDP and GTP, with rapid nucleotide exchange. Plays a role in 16S rRNA processing and 30S ribosomal subunit biogenesis and possibly also in cell cycle regulation and energy metabolism. This is GTPase Era from Shigella flexneri.